A 599-amino-acid chain; its full sequence is Elongation factor 4 (599 aa).

In terms of domain architecture, tr-type G spans 2 to 184 (KNIRNFSIIA…RLVRDIPPPE (183 aa)). GTP-binding positions include 14 to 19 (DHGKST) and 131 to 134 (NKID).

The protein belongs to the TRAFAC class translation factor GTPase superfamily. Classic translation factor GTPase family. LepA subfamily.

The protein resides in the cell inner membrane. The enzyme catalyses GTP + H2O = GDP + phosphate + H(+). Required for accurate and efficient protein synthesis under certain stress conditions. May act as a fidelity factor of the translation reaction, by catalyzing a one-codon backward translocation of tRNAs on improperly translocated ribosomes. Back-translocation proceeds from a post-translocation (POST) complex to a pre-translocation (PRE) complex, thus giving elongation factor G a second chance to translocate the tRNAs correctly. Binds to ribosomes in a GTP-dependent manner. The chain is Elongation factor 4 from Cronobacter sakazakii (strain ATCC BAA-894) (Enterobacter sakazakii).